The chain runs to 739 residues: MQKYKKVIDHLQELMRDPRNIRNIGIIAHVDHGKTTLSDNLLSAAGMISDKMAGEMRALDYHEIEQQRGITIKAANISLYYQRDGKEFAINLVDTPGHIDFTGHVTRSLRVIDGAIVVVDSVEEVMVQTETVTRQALEERVRPLLFINKIDRLIKELKLTPQEIQQKILRIIRDFNGLIEAYGEPEFREKWKVKWDNDSVAFGSALHGWGLTNSIAAKKGIRFSDIVDIYNEDPEGLALRRDIPVHEALLDMVALHVPDPIEAQSYRVERLWRDKQDEELFNALKNCDPNGPLIMGVNAVRIDPHAGIVVTGRVFSGTLREGEDVYLINAKKKQKIQQTSIYMGPYRMRMDEIPAGNIAAVLGLTSASSGETVVADAIKDRVISGFEAIRYVTEPVVTVSVEAKNPQDLPKLIDTLRKLTLQDPNLVMIHNQETGEILLKGTGELHLEISLYEVRKAGLEFDVSEPTVVYRESVRGTSDVVLAKSPNKLNRIWVTASPLNDEVVALIREGRVNERMDSRTLAKVLREEGKMDTEDARNVWTIDEENYNLFINRTVGVQRLDEVREILRQGFMWVMKEGPLAGEPVMGVAIRLVNAMIHEDPAHRGPAQLTPAVRKAIFGAMLSANPVLLEPIYEIQVSTPPELIGSVISLISQKRGKVVGIEERGRISIVKGFIPVRETLGGFSNEMRSMTSGRAFWQTKFSHWEPLPKSLMEQVALEIRRRKGMKEELPKAEEYMDTL.

One can recognise a tr-type G domain in the interval Arg-19 to Ile-261. GTP-binding positions include Ala-28 to Thr-35, Asp-94 to His-98, and Asn-148 to Asp-151. His-603 carries the post-translational modification Diphthamide.

This sequence belongs to the TRAFAC class translation factor GTPase superfamily. Classic translation factor GTPase family. EF-G/EF-2 subfamily.

The protein resides in the cytoplasm. Catalyzes the GTP-dependent ribosomal translocation step during translation elongation. During this step, the ribosome changes from the pre-translocational (PRE) to the post-translocational (POST) state as the newly formed A-site-bound peptidyl-tRNA and P-site-bound deacylated tRNA move to the P and E sites, respectively. Catalyzes the coordinated movement of the two tRNA molecules, the mRNA and conformational changes in the ribosome. This chain is Elongation factor 2, found in Korarchaeum cryptofilum (strain OPF8).